The sequence spans 102 residues: Small ribosomal subunit protein uS10 (102 aa).

Belongs to the universal ribosomal protein uS10 family. Part of the 30S ribosomal subunit.

Functionally, involved in the binding of tRNA to the ribosomes. This chain is Small ribosomal subunit protein uS10, found in Fervidobacterium nodosum (strain ATCC 35602 / DSM 5306 / Rt17-B1).